Reading from the N-terminus, the 261-residue chain is Phosphatidylglycerol--prolipoprotein diacylglyceryl transferase (261 aa).

7 consecutive transmembrane segments (helical) span residues 19–39 (VHWYGLMYLVGFAMAWGLALY), 56–76 (LIFYGALGLIIGGRLGYMLFY), 92–112 (WRGGMSFHGGLIGVIVTTWIF), 126–146 (FVVPLVPLGLAAGRIGNFING), 173–193 (QLYEFLLEGVLLFIVIWWFSA), 199–219 (FAVSSLFLLCYGLFRFTAEFF), and 227–247 (GFVAFGWLTRGQELSLPMIII). Arg-139 contacts a 1,2-diacyl-sn-glycero-3-phospho-(1'-sn-glycerol).

It belongs to the Lgt family.

It is found in the cell inner membrane. It catalyses the reaction L-cysteinyl-[prolipoprotein] + a 1,2-diacyl-sn-glycero-3-phospho-(1'-sn-glycerol) = an S-1,2-diacyl-sn-glyceryl-L-cysteinyl-[prolipoprotein] + sn-glycerol 1-phosphate + H(+). It functions in the pathway protein modification; lipoprotein biosynthesis (diacylglyceryl transfer). Its function is as follows. Catalyzes the transfer of the diacylglyceryl group from phosphatidylglycerol to the sulfhydryl group of the N-terminal cysteine of a prolipoprotein, the first step in the formation of mature lipoproteins. The protein is Phosphatidylglycerol--prolipoprotein diacylglyceryl transferase of Coxiella burnetii (strain CbuK_Q154) (Coxiella burnetii (strain Q154)).